Reading from the N-terminus, the 125-residue chain is Multifunctional methyltransferase subunit TRM112-like protein (125 aa).

One can recognise a TRM112 domain in the interval lysine 2–asparagine 119.

This sequence belongs to the TRM112 family. Part of the heterodimeric BUD23-TRM112 methyltransferase complex; this heterodimerization is necessary for the metabolic stability and activity of the catalytic subunit BUD23. Part of the heterodimeric N6AMT1-TRM112 methyltransferase complex; this heterodimerization is necessary for S-adenosyl-L-methionine-binding to N6AMT1/HEMK2. Part of the heterodimeric ALKBH8-TRM112 methyltransferase complex. Part of the heterodimeric METTL5-TRM112 methyltransferase complex; this heterodimerization is necessary for the stability of the catalytic subunit METTL5. Part of the heterodimeric THUMPD3-TRM112 methyltransferase complex; this complex forms an active tRNA methyltransferase, where TRMT112 acts as an activator of the catalytic subunit THUMPD3. Part of the heterodimeric THUMPD2-TRM112 methyltransferase complex; this complex forms an active tRNA methyltransferase, where TRMT112 acts as an activator of the catalytic subunit THUMPD2. Part of the heterodimeric TRMT11-TRM112 methyltransferase complex; this complex forms an active tRNA methyltransferase, where TRMT112 acts as an activator of the catalytic subunit TRMT11. In terms of tissue distribution, abundantly expressed in the testis, also expressed in the brain, heart, kidney, liver, lung, muscle and spleen.

Its subcellular location is the nucleus. It localises to the nucleoplasm. The protein resides in the cytoplasm. It is found in the perinuclear region. In terms of biological role, acts as an activator of both rRNA/tRNA and protein methyltransferases. Together with methyltransferase BUD23, methylates the N(7) position of a guanine in 18S rRNA. The heterodimer with HEMK2/N6AMT1 catalyzes N5-methylation of ETF1 on 'Gln-185', using S-adenosyl L-methionine as methyl donor. The heterodimer with ALKBH8 catalyzes the methylation of 5-carboxymethyl uridine to 5-methylcarboxymethyl uridine at the wobble position of the anticodon loop in target tRNA species. Together with methyltransferase THUMPD3, catalyzes the formation of N(2)-methylguanosine at position 6 in a broad range of tRNA substrates and at position 7 of tRNA(Trp). Involved in the pre-rRNA processing steps leading to small-subunit rRNA production. Together with methyltransferase METTL5, specifically methylates the 6th position of adenine in position 1832 of 18S rRNA. This chain is Multifunctional methyltransferase subunit TRM112-like protein (Trmt112), found in Mus musculus (Mouse).